Reading from the N-terminus, the 500-residue chain is Lysine--tRNA ligase (500 aa).

Residues Glu410 and Glu417 each contribute to the Mg(2+) site.

This sequence belongs to the class-II aminoacyl-tRNA synthetase family. In terms of assembly, homodimer. Mg(2+) is required as a cofactor.

The protein resides in the cytoplasm. It catalyses the reaction tRNA(Lys) + L-lysine + ATP = L-lysyl-tRNA(Lys) + AMP + diphosphate. The polypeptide is Lysine--tRNA ligase (Pseudomonas syringae pv. syringae (strain B728a)).